A 447-amino-acid chain; its full sequence is Phosphoglucosamine mutase (447 aa).

Serine 103 serves as the catalytic Phosphoserine intermediate. Mg(2+)-binding residues include serine 103, aspartate 242, aspartate 244, and aspartate 246. Serine 103 is subject to Phosphoserine.

This sequence belongs to the phosphohexose mutase family. Requires Mg(2+) as cofactor. In terms of processing, activated by phosphorylation.

The catalysed reaction is alpha-D-glucosamine 1-phosphate = D-glucosamine 6-phosphate. In terms of biological role, catalyzes the conversion of glucosamine-6-phosphate to glucosamine-1-phosphate. The polypeptide is Phosphoglucosamine mutase (Marinobacter nauticus (strain ATCC 700491 / DSM 11845 / VT8) (Marinobacter aquaeolei)).